We begin with the raw amino-acid sequence, 276 residues long: Diaminopimelate epimerase (276 aa).

The substrate site is built by asparagine 13, glutamine 46, and asparagine 66. Cysteine 75 (proton donor) is an active-site residue. Substrate-binding positions include 76–77 (GN), asparagine 159, asparagine 192, and 210–211 (ER). Residue cysteine 219 is the Proton acceptor of the active site. A substrate-binding site is contributed by 220–221 (GS).

It belongs to the diaminopimelate epimerase family. In terms of assembly, homodimer.

The protein localises to the cytoplasm. It carries out the reaction (2S,6S)-2,6-diaminopimelate = meso-2,6-diaminopimelate. It functions in the pathway amino-acid biosynthesis; L-lysine biosynthesis via DAP pathway; DL-2,6-diaminopimelate from LL-2,6-diaminopimelate: step 1/1. Functionally, catalyzes the stereoinversion of LL-2,6-diaminopimelate (L,L-DAP) to meso-diaminopimelate (meso-DAP), a precursor of L-lysine and an essential component of the bacterial peptidoglycan. The polypeptide is Diaminopimelate epimerase (Vibrio parahaemolyticus serotype O3:K6 (strain RIMD 2210633)).